Reading from the N-terminus, the 217-residue chain is 3,4-dihydroxy-2-butanone 4-phosphate synthase (217 aa).

Residues Arg-37–Glu-38, Asp-42, Arg-150–Thr-154, and Glu-174 each bind D-ribulose 5-phosphate. Glu-38 contributes to the Mg(2+) binding site. A Mg(2+)-binding site is contributed by His-153.

It belongs to the DHBP synthase family. Homodimer. It depends on Mg(2+) as a cofactor. The cofactor is Mn(2+).

It catalyses the reaction D-ribulose 5-phosphate = (2S)-2-hydroxy-3-oxobutyl phosphate + formate + H(+). The protein operates within cofactor biosynthesis; riboflavin biosynthesis; 2-hydroxy-3-oxobutyl phosphate from D-ribulose 5-phosphate: step 1/1. Functionally, catalyzes the conversion of D-ribulose 5-phosphate to formate and 3,4-dihydroxy-2-butanone 4-phosphate. The polypeptide is 3,4-dihydroxy-2-butanone 4-phosphate synthase (Shewanella sp. (strain W3-18-1)).